Reading from the N-terminus, the 691-residue chain is DNA ligase (691 aa).

NAD(+)-binding positions include 56-60 (DRAYD), 104-105 (SI), and Glu139. Lys141 functions as the N6-AMP-lysine intermediate in the catalytic mechanism. NAD(+) is bound by residues Arg162, Glu198, Lys314, and Lys338. Zn(2+) is bound by residues Cys429, Cys432, Cys445, and Cys451. One can recognise a BRCT domain in the interval 607–691 (TAGDALSGQT…SLLESHGIEI (85 aa)).

It belongs to the NAD-dependent DNA ligase family. LigA subfamily. Mg(2+) is required as a cofactor. The cofactor is Mn(2+).

The catalysed reaction is NAD(+) + (deoxyribonucleotide)n-3'-hydroxyl + 5'-phospho-(deoxyribonucleotide)m = (deoxyribonucleotide)n+m + AMP + beta-nicotinamide D-nucleotide.. Its function is as follows. DNA ligase that catalyzes the formation of phosphodiester linkages between 5'-phosphoryl and 3'-hydroxyl groups in double-stranded DNA using NAD as a coenzyme and as the energy source for the reaction. It is essential for DNA replication and repair of damaged DNA. The sequence is that of DNA ligase from Natronomonas pharaonis (strain ATCC 35678 / DSM 2160 / CIP 103997 / JCM 8858 / NBRC 14720 / NCIMB 2260 / Gabara) (Halobacterium pharaonis).